A 239-amino-acid polypeptide reads, in one-letter code: Ribosomal RNA small subunit methyltransferase G (239 aa).

S-adenosyl-L-methionine contacts are provided by residues G80, F85, 103–105 (EAS), 131–132 (AE), and R150.

It belongs to the methyltransferase superfamily. RNA methyltransferase RsmG family.

It localises to the cytoplasm. Its function is as follows. Specifically methylates the N7 position of a guanine in 16S rRNA. This Caldanaerobacter subterraneus subsp. tengcongensis (strain DSM 15242 / JCM 11007 / NBRC 100824 / MB4) (Thermoanaerobacter tengcongensis) protein is Ribosomal RNA small subunit methyltransferase G.